Consider the following 305-residue polypeptide: Serine/threonine-protein phosphatase 6 catalytic subunit (305 aa).

Residue Met-1 is modified to N-acetylmethionine. Mn(2+)-binding residues include Asp-53, His-55, Asp-81, and Asn-113. His-114 acts as the Proton donor in catalysis. Residues His-163 and His-237 each contribute to the Mn(2+) site.

It belongs to the PPP phosphatase family. PP-6 (PP-V) subfamily. As to quaternary structure, protein phosphatase 6 (PP6) holoenzyme is proposed to be a heterotrimeric complex formed by the catalytic subunit, a SAPS domain-containing subunit (PP6R) and an ankyrin repeat-domain containing regulatory subunit (ARS). Interacts with subunits PPP6R1, PPP6R2 and PPP6R3. Interacts with subunit ANKRD28. Interacts with IGBP1. Interacts with MAP3K7. Interacts with NFKBIE. Interacts with TRIM14 and WRNIP1; these interactions positively regulate the RIG-I signaling pathway. Mn(2+) serves as cofactor. In terms of tissue distribution, ubiquitously expressed in all tissues tested with strongest expression in lung, spleen, liver, kidney and brain. Weaker expression observed in bladder, pancreas, heart and skeletal muscle.

The protein resides in the mitochondrion. Its subcellular location is the cytoplasm. The enzyme catalyses O-phospho-L-seryl-[protein] + H2O = L-seryl-[protein] + phosphate. It catalyses the reaction O-phospho-L-threonyl-[protein] + H2O = L-threonyl-[protein] + phosphate. Functionally, catalytic subunit of protein phosphatase 6 (PP6). PP6 is a component of a signaling pathway regulating cell cycle progression in response to IL2 receptor stimulation. N-terminal domain restricts G1 to S phase progression in cancer cells, in part through control of cyclin D13 During mitosis, regulates spindle positioning. Down-regulates MAP3K7 kinase activation of the IL1 signaling pathway by dephosphorylation of MAP3K7. Acts as a regulator of innate immunity by mediating dephosphorylation CGAS, STING1 and RIGI. Also participates in the innate immune defense against viruses by desphosphorylating RIGI, an essential step that triggers RIGI-mediated signaling activation. Also regulates innate immunity by acting as a negative regulator of the cGAS-STING pathway: mediates dephosphorylation and inactivation of CGAS and STING1. CGAS dephosphorylation at 'Ser-420' impairs its ability to bind GTP, thereby inactivating it. This Mus musculus (Mouse) protein is Serine/threonine-protein phosphatase 6 catalytic subunit.